Consider the following 72-residue polypeptide: Holocyclotoxin-1 (72 aa).

The signal sequence occupies residues 1 to 22; that stretch reads MSKVTTVFIGALVLLLLIENGF. 4 disulfides stabilise this stretch: cysteine 24–cysteine 40, cysteine 32–cysteine 57, cysteine 36–cysteine 60, and cysteine 42–cysteine 70.

As to expression, expressed in salivary glands.

It localises to the secreted. Its function is as follows. Probable neurotoxin. The polypeptide is Holocyclotoxin-1 (Ixodes holocyclus (Australian paralysis tick)).